We begin with the raw amino-acid sequence, 100 residues long: MKDKNFTGMPKELQPWEGFGREAQAVKIVVDKRRYGKFVTIIEGIDPKIEDIEKIAKELKKKVASGGTVKEGRIIELQGDHRQEVKKFLEDMGFKVSVEQ.

The protein belongs to the SUI1 family.

This Thermoplasma volcanium (strain ATCC 51530 / DSM 4299 / JCM 9571 / NBRC 15438 / GSS1) protein is Protein translation factor SUI1 homolog.